Here is a 354-residue protein sequence, read N- to C-terminus: Rhodopsin (354 aa).

At 1 to 36 (MNGTEGPYFYVPMVNTTGIVRSPYEYPQYYLVSPAA) the chain is on the extracellular side. N-linked (GlcNAc...) asparagine glycosylation is found at Asn2 and Asn15. The helical transmembrane segment at 37-61 (YACLGAYMFFLILVGFPINFLTLYV) threads the bilayer. The Cytoplasmic segment spans residues 62–73 (TIEHKKLRTPLN). Residues 74–96 (YILLNLAVADLFMVFGGFTTTIY) traverse the membrane as a helical segment. The Extracellular portion of the chain corresponds to 97–110 (TSMHGYFVLGRLGC). An intrachain disulfide couples Cys110 to Cys187. Residues 111 to 133 (NLEGYFATLGGEIGLWSLVVLAV) form a helical membrane-spanning segment. A 'Ionic lock' involved in activated form stabilization motif is present at residues 134 to 136 (ERW). Over 134–152 (ERWLVVCKPISNFRFSENH) the chain is Cytoplasmic. Residues 153–173 (AIMGLVFTWIMANSCAAPPLL) form a helical membrane-spanning segment. Residues 174–202 (GWSRYIPEGMQCSCGVDYYTRAEGFNNES) lie on the Extracellular side of the membrane. A helical membrane pass occupies residues 203-224 (FVIYMFICHFCIPLIVVFFCYG). Topologically, residues 225 to 252 (RLLCAVKEAAAAQQESETTQRAEREVTR) are cytoplasmic. The chain crosses the membrane as a helical span at residues 253 to 274 (MVVIMVIGFLVCWIPYASVAWY). At 275–286 (IFTHQGSEFGPL) the chain is on the extracellular side. A helical transmembrane segment spans residues 287 to 308 (FMTVPAFFAKSASIYNPLIYIC). Lys296 is subject to N6-(retinylidene)lysine. Residues 309–354 (MNKQFRHCMITTLCCGKNPFEEEEGASTTASKTEASSVSSSSVSPA) lie on the Cytoplasmic side of the membrane. 2 S-palmitoyl cysteine lipidation sites follow: Cys322 and Cys323. Residues 333–354 (GASTTASKTEASSVSSSSVSPA) form a disordered region. The span at 334–354 (ASTTASKTEASSVSSSSVSPA) shows a compositional bias: low complexity.

It belongs to the G-protein coupled receptor 1 family. Opsin subfamily. Post-translationally, phosphorylated on some or all of the serine and threonine residues present in the C-terminal region. In terms of processing, contains one covalently linked retinal chromophore.

Its subcellular location is the membrane. It is found in the cell projection. The protein localises to the cilium. The protein resides in the photoreceptor outer segment. In terms of biological role, photoreceptor required for image-forming vision at low light intensity. While most salt water fish species use retinal as chromophore, most freshwater fish use 3-dehydroretinal, or a mixture of retinal and 3-dehydroretinal. Light-induced isomerization of 11-cis to all-trans retinal triggers a conformational change that activates signaling via G-proteins. Subsequent receptor phosphorylation mediates displacement of the bound G-protein alpha subunit by arrestin and terminates signaling. The polypeptide is Rhodopsin (rho) (Poecilia reticulata (Guppy)).